A 56-amino-acid chain; its full sequence is Large ribosomal subunit protein bL32 (56 aa).

Positions 1–37 (MAVQQNKKSRSRRDMRRSHDALTTAAVSVDKTTGETH) are disordered. Basic residues predominate over residues 7-16 (KKSRSRRDMR).

Belongs to the bacterial ribosomal protein bL32 family.

The sequence is that of Large ribosomal subunit protein bL32 from Haemophilus ducreyi (strain 35000HP / ATCC 700724).